Reading from the N-terminus, the 505-residue chain is Glutamate--tRNA ligase (505 aa).

The 'HIGH' region motif lies at 12–22 (PSPTGALHIGG). The 'KMSKS' region motif lies at 260–264 (KLSKR). Lys-263 provides a ligand contact to ATP.

Belongs to the class-I aminoacyl-tRNA synthetase family. Glutamate--tRNA ligase type 1 subfamily. In terms of assembly, monomer.

The protein localises to the cytoplasm. It catalyses the reaction tRNA(Glu) + L-glutamate + ATP = L-glutamyl-tRNA(Glu) + AMP + diphosphate. Functionally, catalyzes the attachment of glutamate to tRNA(Glu) in a two-step reaction: glutamate is first activated by ATP to form Glu-AMP and then transferred to the acceptor end of tRNA(Glu). The protein is Glutamate--tRNA ligase of Phocaeicola vulgatus (strain ATCC 8482 / DSM 1447 / JCM 5826 / CCUG 4940 / NBRC 14291 / NCTC 11154) (Bacteroides vulgatus).